The sequence spans 274 residues: Shikimate dehydrogenase (NADP(+)) (274 aa).

Residues 20–22 and threonine 68 contribute to the shikimate site; that span reads SKS. Catalysis depends on lysine 72, which acts as the Proton acceptor. Aspartate 84 lines the NADP(+) pocket. Asparagine 93 and aspartate 109 together coordinate shikimate. NADP(+) is bound by residues 131-135 and leucine 217; that span reads GAGGA. Tyrosine 219 contributes to the shikimate binding site. Glycine 240 is a binding site for NADP(+).

The protein belongs to the shikimate dehydrogenase family. Homodimer.

The enzyme catalyses shikimate + NADP(+) = 3-dehydroshikimate + NADPH + H(+). The protein operates within metabolic intermediate biosynthesis; chorismate biosynthesis; chorismate from D-erythrose 4-phosphate and phosphoenolpyruvate: step 4/7. Involved in the biosynthesis of the chorismate, which leads to the biosynthesis of aromatic amino acids. Catalyzes the reversible NADPH linked reduction of 3-dehydroshikimate (DHSA) to yield shikimate (SA). The protein is Shikimate dehydrogenase (NADP(+)) of Sphingopyxis alaskensis (strain DSM 13593 / LMG 18877 / RB2256) (Sphingomonas alaskensis).